The primary structure comprises 267 residues: 4-hydroxy-tetrahydrodipicolinate reductase (267 aa).

Residue 10–15 (GANGRM) participates in NAD(+) binding. Residue R37 coordinates NADP(+). Residues 98 to 100 (GTT) and 122 to 125 (ARNY) each bind NAD(+). Residue H155 is the Proton donor/acceptor of the active site. A (S)-2,3,4,5-tetrahydrodipicolinate-binding site is contributed by H156. Catalysis depends on K159, which acts as the Proton donor. A (S)-2,3,4,5-tetrahydrodipicolinate-binding site is contributed by 165–166 (GT).

It belongs to the DapB family.

It localises to the cytoplasm. It catalyses the reaction (S)-2,3,4,5-tetrahydrodipicolinate + NAD(+) + H2O = (2S,4S)-4-hydroxy-2,3,4,5-tetrahydrodipicolinate + NADH + H(+). It carries out the reaction (S)-2,3,4,5-tetrahydrodipicolinate + NADP(+) + H2O = (2S,4S)-4-hydroxy-2,3,4,5-tetrahydrodipicolinate + NADPH + H(+). It participates in amino-acid biosynthesis; L-lysine biosynthesis via DAP pathway; (S)-tetrahydrodipicolinate from L-aspartate: step 4/4. Its function is as follows. Catalyzes the conversion of 4-hydroxy-tetrahydrodipicolinate (HTPA) to tetrahydrodipicolinate. The protein is 4-hydroxy-tetrahydrodipicolinate reductase of Pseudoalteromonas translucida (strain TAC 125).